The sequence spans 444 residues: Aspartate--tRNA(Asp/Asn) ligase (444 aa).

Glu-176 provides a ligand contact to L-aspartate. The segment at 198-201 (QLFK) is aspartate. Arg-220 is an L-aspartate binding site. ATP-binding positions include 220-222 (RAE), 228-230 (RHL), and Glu-367. Mg(2+)-binding residues include Glu-367 and Ser-370. Positions 370 and 374 each coordinate L-aspartate. 415-418 (GCER) serves as a coordination point for ATP.

This sequence belongs to the class-II aminoacyl-tRNA synthetase family. Type 2 subfamily. Homodimer. It depends on Mg(2+) as a cofactor.

It localises to the cytoplasm. The catalysed reaction is tRNA(Asx) + L-aspartate + ATP = L-aspartyl-tRNA(Asx) + AMP + diphosphate. Functionally, aspartyl-tRNA synthetase with relaxed tRNA specificity since it is able to aspartylate not only its cognate tRNA(Asp) but also tRNA(Asn). Reaction proceeds in two steps: L-aspartate is first activated by ATP to form Asp-AMP and then transferred to the acceptor end of tRNA(Asp/Asn). The chain is Aspartate--tRNA(Asp/Asn) ligase from Methanosarcina barkeri (strain Fusaro / DSM 804).